Reading from the N-terminus, the 232-residue chain is Orotidine 5'-phosphate decarboxylase (232 aa).

Residues aspartate 13, lysine 35, 62-71 (DLKFHDIPNT), threonine 122, arginine 182, glutamine 191, glycine 211, and arginine 212 contribute to the substrate site. The Proton donor role is filled by lysine 64.

The protein belongs to the OMP decarboxylase family. Type 1 subfamily. Homodimer.

It carries out the reaction orotidine 5'-phosphate + H(+) = UMP + CO2. The protein operates within pyrimidine metabolism; UMP biosynthesis via de novo pathway; UMP from orotate: step 2/2. In terms of biological role, catalyzes the decarboxylation of orotidine 5'-monophosphate (OMP) to uridine 5'-monophosphate (UMP). The polypeptide is Orotidine 5'-phosphate decarboxylase (Pseudomonas syringae pv. tomato (strain ATCC BAA-871 / DC3000)).